The following is a 1137-amino-acid chain: MFDCWRFILCKRPGSNSYSSPQRPNEAKKEETDHQIDVSDVIRLVQDTPEATAMATDEIMHQDIVPLCAADIQDQLKKRFAYLSGGRGQDGSPVITFPDYPAFSEIPDKEFQNVMTYLTSIPSLQDAGIGFILVIDRRRDKWTSVKASVLRIAASFPANLQLVLVLRPTGFFQRTLSDIAFKFNRDDFKMKVPVIMLSSVPDLHGYIDKSQLTEDLGGTLDYCHSRWLCQRTAIESFALMVKQTAQMLQSFGTELAETELPNDVQSTSSVLCAHTEKKDKAKEDLRLALKEGHSVLESLRELQAEGSEPSVNQDQLDNQATVQRLLAQLNETEAAFDEFWAKHQQKLEQCLQLRHFEQGFREVKAILDAASQKIATFTDIGNSLAHVEHLLRDLASFEEKSGVAVERARALSLDGEQLIGNKHYAVDSIRPKCQELRHLCDQFSAEIARRRGLLSKSLELHRRLETSMKWCDEGIYLLASQPVDKCQSQDGAEAALQEIEKFLETGAENKIQELNAIYKEYESILNQDLMEHVRKVFQKQASMEEVFHRRQASLKKLAARQTRPVQPVAPRPEALAKSPCPSPGIRRGSENSSSEGGALRRGPYRRAKSEMSESRQGRGSAGEEEESLAILRRHVMSELLDTERAYVEELLCVLEGYAAEMDNPLMAHLLSTGLHNKKDVLFGNMEEIYHFHNRIFLRELENYTDCPELVGRCFLERMEDFQIYEKYCQNKPRSESLWRQCSDCPFFQECQRKLDHKLSLDSYLLKPVQRITKYQLLLKEMLKYSRNCEGAEDLQEALSSILGILKAVNDSMHLIAITGYDGNLGDLGKLLMQGSFSVWTDHKRGHTKVKELARFKPMQRHLFLHEKAVLFCKKREENGEGYEKAPSYSYKQSLNMAAVGITENVKGDAKKFEIWYNAREEVYIVQAPTPEIKAAWVNEIRKVLTSQLQACREASQHRALEQSQSLPLPAPTSTSPSRGNSRNIKKLEERKTDPLSLEGYVSSAPLTKPPEKGKGWSKTSHSLEAPEDDGGWSSAEEQINSSDAEEDGGLGPKKLVPGKYTVVADHEKGGPDALRVRSGDVVELVQEGDEGLWYVRDPTTGKEGWVPASSLSVRLGPSGSAQCLSSSGKAHVPRAHP.

The CRAL-TRIO domain maps to 52-224; the sequence is TAMATDEIMH…DLGGTLDYCH (173 aa). The stretch at 351–456 is one Spectrin repeat; the sequence is LQLRHFEQGF…IARRRGLLSK (106 aa). Residues serine 457 and serine 480 each carry the phosphoserine modification. The stretch at 503–529 forms a coiled coil; the sequence is LETGAENKIQELNAIYKEYESILNQDL. The segment at 557–625 is disordered; the sequence is LAARQTRPVQ…QGRGSAGEEE (69 aa). Residues 584–597 show a composition bias toward low complexity; that stretch reads GIRRGSENSSSEGG. The segment covering 607-616 has biased composition (basic and acidic residues); the sequence is AKSEMSESRQ. Phosphoserine is present on serine 620. The region spanning 631–811 is the DH domain; that stretch reads LRRHVMSELL…LGILKAVNDS (181 aa). The region spanning 829–945 is the PH domain; that stretch reads KLLMQGSFSV…WVNEIRKVLT (117 aa). Disordered regions lie at residues 955-1058 and 1116-1137; these read SQHR…LVPG and GPSG…RAHP. Positions 962-977 are enriched in low complexity; sequence QSQSLPLPAPTSTSPS. Serine 1033, serine 1034, serine 1041, and serine 1042 each carry phosphoserine. The SH3 domain occupies 1055-1116; it reads LVPGKYTVVA…PASSLSVRLG (62 aa). The segment covering 1119–1128 has biased composition (polar residues); the sequence is GSAQCLSSSG.

The protein belongs to the MCF2 family. In terms of assembly, interacts with GTP-bound RAC1. Interacts with CDC42. Interacts with RHOA. Interacts with CCPG1, which results in specific inhibition of its exchange activity toward RHOA, but does not affect its activity on CDC42.

It is found in the cytoplasm. It localises to the cell membrane. The protein resides in the endomembrane system. Its function is as follows. Guanine nucleotide exchange factor that catalyzes guanine nucleotide exchange on RHOA and CDC42, and thereby contributes to the regulation of RHOA and CDC42 signaling pathways. Seems to lack activity with RAC1. Becomes activated and highly tumorigenic by truncation of the N-terminus. Isoform 5 activates CDC42. In terms of biological role, does not catalyze guanine nucleotide exchange on CDC42. The sequence is that of Guanine nucleotide exchange factor DBS (MCF2L) from Homo sapiens (Human).